Reading from the N-terminus, the 458-residue chain is Alpha-2C adrenergic receptor (458 aa).

The Extracellular segment spans residues M1–V51. N19 and N33 each carry an N-linked (GlcNAc...) asparagine glycan. The helical transmembrane segment at A52–V76 threads the bilayer. Over L77–L88 the chain is Cytoplasmic. The helical transmembrane segment at F89–M114 threads the bilayer. At A115–C124 the chain is on the extracellular side. C124 and C202 are disulfide-bonded. The chain crosses the membrane as a helical span at residues G125 to L147. The Cytoplasmic segment spans residues D148–V168. The chain crosses the membrane as a helical span at residues K169 to Y191. Over R192 to E207 the chain is Extracellular. A helical membrane pass occupies residues T208 to A231. Over R232–V379 the chain is Cytoplasmic. Residues S245–R343 form a disordered region. Residues R291–R303 are compositionally biased toward basic residues. A helical transmembrane segment spans residues L380–I403. At C404 to K416 the chain is on the extracellular side. A helical membrane pass occupies residues F417–N437. Topologically, residues Q438 to Q458 are cytoplasmic.

Belongs to the G-protein coupled receptor 1 family. Adrenergic receptor subfamily. ADRA2C sub-subfamily.

The protein localises to the cell membrane. Its function is as follows. Alpha-2 adrenergic receptors mediate the catecholamine-induced inhibition of adenylate cyclase through the action of G proteins. The protein is Alpha-2C adrenergic receptor (Adra2c) of Mus musculus (Mouse).